The primary structure comprises 331 residues: WW domain-containing protein C2F3.14c (331 aa).

Residues 1-184 (MSSSKDCKAT…TNENQAQPSI (184 aa)) form a disordered region. The segment covering 9–22 (ATSNVDQTIPASNV) has biased composition (polar residues). The segment covering 23–41 (NSGDFISSNTSSSNSENSN) has biased composition (low complexity). Polar residues predominate over residues 57-89 (SFISENTPKNTFESTQTYENLESISKNEPTSEA). A compositionally biased stretch (pro residues) spans 105-145 (REPPLPNEPVPEEPLPGEPPLPDEPVPEEPLPGEPPLPNEP). The span at 158-184 (SDETVSETSKNDTSNSPTNENQAQPSI) shows a compositional bias: polar residues. Residues 187–220 (SEGHRIAAIWDPSQQAYYFWDTLTNTTSWNNPLE) enclose the WW domain. The segment at 290–309 (YTRKEMEQMKRRTKEKKEMK) is disordered. Positions 292-309 (RKEMEQMKRRTKEKKEMK) are enriched in basic and acidic residues.

It localises to the nucleus. In Schizosaccharomyces pombe (strain 972 / ATCC 24843) (Fission yeast), this protein is WW domain-containing protein C2F3.14c.